The following is a 428-amino-acid chain: Something about silencing protein 10 (428 aa).

The segment at 1 to 93 (MDSDGDDYVM…NTMDWGSKRS (93 aa)) is disordered. Composition is skewed to acidic residues over residues 15–24 (QEYDDEEREI) and 46–62 (SDDD…EQQD). Phosphoserine is present on residues S152, S323, S324, and S337. The interval 317 to 386 (GQQASVSSDD…LRNPRVKHRG (70 aa)) is disordered. The span at 324-336 (SDDDDNDDDDDAE) shows a compositional bias: acidic residues. Over residues 344 to 353 (EEAGEEEEEE) the composition is skewed to acidic residues. Residues 370–386 (TPHRKKELRNPRVKHRG) are compositionally biased toward basic residues.

Belongs to the SAS10 family.

The protein resides in the nucleus. Essential for gene silencing: has a role in the structure of silenced chromatin. May be involved in gene regulation during development. Binds RNA. The sequence is that of Something about silencing protein 10 from Drosophila melanogaster (Fruit fly).